Consider the following 491-residue polypeptide: MLAMEKEFDSKLVLQGNSSNGANVSRSKSFSFKAPQENFTSHDFEFGKIYGVGSYSKVVRAKKKETGTVYALKIMDKKFITKENKTAYVKLERIVLDQLEHPGIIKLYFTFQDTSSLYMALESCEGGELFDQITRKGRLSEDEARFYTAEVVDALEYIHSMGLIHRDIKPENLLLTSDGHIKIADFGSVKPMQDSQITVLPNAASDDKACTFVGTAAYVPPEVLNSSPATFGNDLWALGCTLYQMLSGTSPFKDASEWLIFQRIIARDIKFPNHFSEAARDLIDRLLDTEPSRRPGAGSEGYVALKRHPFFNGVDWKNLRSQTPPKLAPDPASQTASPERDDTHGSPWNLTHIGDSLATQNEGHSAPPTSSESSGSITRLASIDSFDSRWQQFLEPGESVLMISAVKKLQKITSKKVQLILTNKPKLIYVDPSKLVVKGNIIWSDNSNDLNVVVTSPSHFKICTPKKVLSFEDAKQRASVWKKAIETLQNR.

The region spanning 44–311 is the Protein kinase domain; that stretch reads FEFGKIYGVG…YVALKRHPFF (268 aa). ATP contacts are provided by residues 54–56 and lysine 73; that span reads SYS. The tract at residues 75–119 is PIF-pocket; the sequence is MDKKFITKENKTAYVKLERIVLDQLEHPGIIKLYFTFQDTSSLYM. Residues 77–112 form a PIF-binding region; the sequence is KKFITKENKTAYVKLERIVLDQLEHPGIIKLYFTFQ. Residues 122 to 124 and glutamate 128 contribute to the ATP site; that span reads ESC. Aspartate 167 acts as the Proton acceptor in catalysis. Glutamate 171 is an ATP binding site. Residue serine 177 is modified to Phosphoserine. Aspartate 185 lines the ATP pocket. The activation loop stretch occupies residues 185–222; sequence DFGSVKPMQDSQITVLPNAASDDKACTFVGTAAYVPPE. Threonine 211 is modified (phosphothreonine; by autocatalysis). Serine 276 and serine 337 each carry phosphoserine. A disordered region spans residues 321–377; that stretch reads SQTPPKLAPDPASQTASPERDDTHGSPWNLTHIGDSLATQNEGHSAPPTSSESSGSI. Low complexity predominate over residues 365–376; it reads SAPPTSSESSGS. Phosphoserine is present on serine 382. The PH domain maps to 386-491; the sequence is FDSRWQQFLE…KKAIETLQNR (106 aa).

The protein belongs to the protein kinase superfamily. AGC Ser/Thr protein kinase family. PDPK1 subfamily. Interacts with AGC1-5 and AGC1-7. Interacts with the C-terminal PIF domain of the protein kinases D6PK/AGC1-1, OXI1/AGC2-1 and PID. Phosphorylation on Thr-211 in the activation loop is required for full activity. PDK1 itself can autophosphorylate Thr-211, leading to its own activation. Ubiquitous.

It localises to the cytoplasm. It is found in the membrane. The catalysed reaction is L-seryl-[protein] + ATP = O-phospho-L-seryl-[protein] + ADP + H(+). It carries out the reaction L-threonyl-[protein] + ATP = O-phospho-L-threonyl-[protein] + ADP + H(+). With respect to regulation, activated by phosphatidic acid (PA) and in response to the fungal elicitor xylanase. Its function is as follows. May couple lipid signals to the activation-loop phosphorylation of several protein kinases of the so-called AGC kinase family. Interacts via its pleckstrin homology domain with phosphatidic acid, PtdIns3P and PtdIns(3,4)P2 and to a lesser extent with PtdIns(4,5)P2 and PtdIns4P. May play a general role in signaling processes controlling the pathogen/stress response, polar auxin transport and development. Transphosphorylates the AGC protein kinases OXI1/AGC2-1, PK1/S6K1, PK19/S6K2 and PID resulting in their activation. The polypeptide is 3-phosphoinositide-dependent protein kinase 1 (PDPK1) (Arabidopsis thaliana (Mouse-ear cress)).